The primary structure comprises 245 residues: 4-hydroxy-tetrahydrodipicolinate reductase (245 aa).

NAD(+)-binding positions include G8–M13, G78–T80, and S102–M105. Residue H134 is the Proton donor/acceptor of the active site. H135 lines the (S)-2,3,4,5-tetrahydrodipicolinate pocket. Catalysis depends on K138, which acts as the Proton donor. G144–T145 serves as a coordination point for (S)-2,3,4,5-tetrahydrodipicolinate.

The protein belongs to the DapB family.

The protein resides in the cytoplasm. It catalyses the reaction (S)-2,3,4,5-tetrahydrodipicolinate + NAD(+) + H2O = (2S,4S)-4-hydroxy-2,3,4,5-tetrahydrodipicolinate + NADH + H(+). It carries out the reaction (S)-2,3,4,5-tetrahydrodipicolinate + NADP(+) + H2O = (2S,4S)-4-hydroxy-2,3,4,5-tetrahydrodipicolinate + NADPH + H(+). The protein operates within amino-acid biosynthesis; L-lysine biosynthesis via DAP pathway; (S)-tetrahydrodipicolinate from L-aspartate: step 4/4. Its function is as follows. Catalyzes the conversion of 4-hydroxy-tetrahydrodipicolinate (HTPA) to tetrahydrodipicolinate. In Rickettsia akari (strain Hartford), this protein is 4-hydroxy-tetrahydrodipicolinate reductase.